Consider the following 55-residue polypeptide: Ferredoxin (55 aa).

2 4Fe-4S ferredoxin-type domains span residues Y2–G26 and S27–D55. [4Fe-4S] cluster is bound by residues C8, C11, C14, C18, C36, C39, C42, and C46.

[4Fe-4S] cluster serves as cofactor.

In terms of biological role, ferredoxins are iron-sulfur proteins that transfer electrons in a wide variety of metabolic reactions. The protein is Ferredoxin of Butyribacterium methylotrophicum.